A 142-amino-acid chain; its full sequence is Small ribosomal subunit protein uS19 (142 aa).

At Ser2 the chain carries N-acetylserine. Glycyl lysine isopeptide (Lys-Gly) (interchain with G-Cter in ubiquitin) cross-links involve residues Lys24, Lys35, and Lys64.

It belongs to the universal ribosomal protein uS19 family. As to quaternary structure, component of the small ribosomal subunit (SSU). Mature yeast ribosomes consist of a small (40S) and a large (60S) subunit. The 40S small subunit contains 1 molecule of ribosomal RNA (18S rRNA) and 33 different proteins (encoded by 57 genes). The large 60S subunit contains 3 rRNA molecules (25S, 5.8S and 5S rRNA) and 46 different proteins (encoded by 81 genes).

Its subcellular location is the cytoplasm. In terms of biological role, component of the ribosome, a large ribonucleoprotein complex responsible for the synthesis of proteins in the cell. The small ribosomal subunit (SSU) binds messenger RNAs (mRNAs) and translates the encoded message by selecting cognate aminoacyl-transfer RNA (tRNA) molecules. The large subunit (LSU) contains the ribosomal catalytic site termed the peptidyl transferase center (PTC), which catalyzes the formation of peptide bonds, thereby polymerizing the amino acids delivered by tRNAs into a polypeptide chain. The nascent polypeptides leave the ribosome through a tunnel in the LSU and interact with protein factors that function in enzymatic processing, targeting, and the membrane insertion of nascent chains at the exit of the ribosomal tunnel. uS19 is involved in the nuclear export of the small ribosomal subunit precursor. Has a role in the late stage of the assembly of pre-40S particles within the nucleus and controls their export to the cytoplasm. The protein is Small ribosomal subunit protein uS19 of Saccharomyces cerevisiae (strain ATCC 204508 / S288c) (Baker's yeast).